The primary structure comprises 636 residues: Chaperone protein DnaK (636 aa).

Phosphothreonine; by autocatalysis is present on threonine 198. The segment at 598-636 (YAAKEQPGEHGETGSGEQARKESGKDENVVDADFEEVKK) is disordered. A compositionally biased stretch (basic and acidic residues) spans 603-625 (QPGEHGETGSGEQARKESGKDEN). Residues 626–636 (VVDADFEEVKK) show a composition bias toward acidic residues.

This sequence belongs to the heat shock protein 70 family.

Its function is as follows. Acts as a chaperone. The sequence is that of Chaperone protein DnaK from Pelobacter propionicus (strain DSM 2379 / NBRC 103807 / OttBd1).